Reading from the N-terminus, the 255-residue chain is 1-(5-phosphoribosyl)-5-[(5-phosphoribosylamino)methylideneamino] imidazole-4-carboxamide isomerase (255 aa).

D8 (proton acceptor) is an active-site residue. D129 functions as the Proton donor in the catalytic mechanism.

It belongs to the HisA/HisF family.

It is found in the cytoplasm. It catalyses the reaction 1-(5-phospho-beta-D-ribosyl)-5-[(5-phospho-beta-D-ribosylamino)methylideneamino]imidazole-4-carboxamide = 5-[(5-phospho-1-deoxy-D-ribulos-1-ylimino)methylamino]-1-(5-phospho-beta-D-ribosyl)imidazole-4-carboxamide. Its pathway is amino-acid biosynthesis; L-histidine biosynthesis; L-histidine from 5-phospho-alpha-D-ribose 1-diphosphate: step 4/9. This is 1-(5-phosphoribosyl)-5-[(5-phosphoribosylamino)methylideneamino] imidazole-4-carboxamide isomerase from Prochlorococcus marinus (strain MIT 9312).